The sequence spans 27 residues: Delta-conotoxin TsVIA (27 aa).

3 disulfide bridges follow: cysteine 1–cysteine 17, cysteine 8–cysteine 21, and cysteine 16–cysteine 25.

It belongs to the conotoxin O1 superfamily. In terms of tissue distribution, expressed by the venom duct.

It localises to the secreted. In terms of biological role, delta-conotoxins bind to site 6 of voltage-gated sodium channels (Nav) and inhibit the inactivation process. This toxin inhibits tetrodotoxin(TTX)-sensitive sodium channels. A test on mouse Nav1.6/SCN8A confirms this sensitivity. This Conus tessulatus (Tessellate cone) protein is Delta-conotoxin TsVIA.